A 489-amino-acid chain; its full sequence is Glucose-6-phosphate 1-dehydrogenase (489 aa).

2 residues coordinate NADP(+): R50 and K151. Substrate contacts are provided by H181, K185, E219, and D238. H243 functions as the Proton acceptor in the catalytic mechanism. The substrate site is built by K341 and K346.

The protein belongs to the glucose-6-phosphate dehydrogenase family. Homodimer.

The enzyme catalyses D-glucose 6-phosphate + NADP(+) = 6-phospho-D-glucono-1,5-lactone + NADPH + H(+). The protein operates within carbohydrate degradation; pentose phosphate pathway; D-ribulose 5-phosphate from D-glucose 6-phosphate (oxidative stage): step 1/3. Its function is as follows. Catalyzes the oxidation of glucose 6-phosphate to 6-phosphogluconolactone. The chain is Glucose-6-phosphate 1-dehydrogenase from Gluconobacter oxydans (strain 621H) (Gluconobacter suboxydans).